Here is a 292-residue protein sequence, read N- to C-terminus: Aspartate carbamoyltransferase catalytic subunit (292 aa).

Carbamoyl phosphate is bound by residues R49 and T50. Residue K77 participates in L-aspartate binding. Residues R99, H127, and Q130 each coordinate carbamoyl phosphate. Residues R161 and R211 each coordinate L-aspartate. Positions 250 and 251 each coordinate carbamoyl phosphate.

The protein belongs to the aspartate/ornithine carbamoyltransferase superfamily. ATCase family. In terms of assembly, heterododecamer (2C3:3R2) of six catalytic PyrB chains organized as two trimers (C3), and six regulatory PyrI chains organized as three dimers (R2).

The catalysed reaction is carbamoyl phosphate + L-aspartate = N-carbamoyl-L-aspartate + phosphate + H(+). It functions in the pathway pyrimidine metabolism; UMP biosynthesis via de novo pathway; (S)-dihydroorotate from bicarbonate: step 2/3. Catalyzes the condensation of carbamoyl phosphate and aspartate to form carbamoyl aspartate and inorganic phosphate, the committed step in the de novo pyrimidine nucleotide biosynthesis pathway. This is Aspartate carbamoyltransferase catalytic subunit from Campylobacter lari (strain RM2100 / D67 / ATCC BAA-1060).